A 141-amino-acid polypeptide reads, in one-letter code: MALERTFSIVKPDAVERNLIGEIYHRIEKAGLRIVAAKMVHLTEEQASGFYAEHEGKPFFPALKEFMTSGPIMVQVLEGEDAIARYRELMGKTNPEEAACGTIRADYALSMRHNSVHGSDSPESAAREIEFFFPESEICPR.

6 residues coordinate ATP: Lys11, Phe59, Arg87, Thr93, Arg104, and Asn114. His117 serves as the catalytic Pros-phosphohistidine intermediate.

The protein belongs to the NDK family. In terms of assembly, homotetramer. Mg(2+) serves as cofactor.

The protein resides in the cytoplasm. It catalyses the reaction a 2'-deoxyribonucleoside 5'-diphosphate + ATP = a 2'-deoxyribonucleoside 5'-triphosphate + ADP. It carries out the reaction a ribonucleoside 5'-diphosphate + ATP = a ribonucleoside 5'-triphosphate + ADP. In terms of biological role, major role in the synthesis of nucleoside triphosphates other than ATP. The ATP gamma phosphate is transferred to the NDP beta phosphate via a ping-pong mechanism, using a phosphorylated active-site intermediate. This is Nucleoside diphosphate kinase from Vibrio campbellii (strain ATCC BAA-1116).